The chain runs to 478 residues: MANKSGRITQVIGAVVDVQFDSHLPEILNALETTNQGNRLVLEVAQHLGENTVRTIAMDSTEGLVRGQAVEDTGGPIMVPVGEATLGRIMNVIGEAVDELGPVVGEAKRAIHQQAPSYSEQSTEAEMLVTGIKVVDLLAPYSKGGKIGLFGGAGVGKTVLIMELINNIAKAHGGYSVFAGVGERTREGNDLYHEMIESKVNVDPHENNGSSAGSKCALVYGQMNEPPGARARVALTGLTVAEHFRDQGQDVLFFVDNIFRFTQAGSEVSALLGRIPSAVGYQPTLATDMGALQERITTTTKGSITSVQAIYVPADDLTDPAPAASFAHLDATTVLSRSIAEKGIYPAVDPLDSTSRILSPLVIGEEHYNVARQVQQTLQRYKALQDIIAILGMDELSEEDKLTVARARKIERFLSQPFHVAEVFTGSPGKLVDLADTIKGFKGLVEGKYDHLPEQAFYMVGTIEEAIEKGKKLAAEAA.

151–158 is a binding site for ATP; the sequence is GGAGVGKT.

The protein belongs to the ATPase alpha/beta chains family. In terms of assembly, F-type ATPases have 2 components, CF(1) - the catalytic core - and CF(0) - the membrane proton channel. CF(1) has five subunits: alpha(3), beta(3), gamma(1), delta(1), epsilon(1). CF(0) has three main subunits: a(1), b(2) and c(9-12). The alpha and beta chains form an alternating ring which encloses part of the gamma chain. CF(1) is attached to CF(0) by a central stalk formed by the gamma and epsilon chains, while a peripheral stalk is formed by the delta and b chains.

It is found in the cell inner membrane. The catalysed reaction is ATP + H2O + 4 H(+)(in) = ADP + phosphate + 5 H(+)(out). Its function is as follows. Produces ATP from ADP in the presence of a proton gradient across the membrane. The catalytic sites are hosted primarily by the beta subunits. This is ATP synthase subunit beta from Azorhizobium caulinodans (strain ATCC 43989 / DSM 5975 / JCM 20966 / LMG 6465 / NBRC 14845 / NCIMB 13405 / ORS 571).